A 351-amino-acid polypeptide reads, in one-letter code: Maleylacetate reductase (351 aa).

This sequence belongs to the iron-containing alcohol dehydrogenase family. As to quaternary structure, homodimer.

It catalyses the reaction 3-oxoadipate + NAD(+) = maleylacetate + NADH + H(+). Its pathway is aromatic compound metabolism. In terms of biological role, involved in the gamma-resorcylate (2,6-dihydroxybenzoate) catabolism. Catalyzes the reduction of maleylacetate to 3-oxoadipate. The chain is Maleylacetate reductase from Rhizobium sp. (strain MTP-10005).